Reading from the N-terminus, the 708-residue chain is Fatty acid oxidation complex subunit alpha (708 aa).

The enoyl-CoA hydratase stretch occupies residues 1-190; that stretch reads MSQDKAFTME…KAGLVTEVVP (190 aa). Residues 310-708 form a 3-hydroxyacyl-CoA dehydrogenase region; it reads DSVKRVGVLG…MLENGWNFYQ (399 aa).

In the N-terminal section; belongs to the enoyl-CoA hydratase/isomerase family. It in the central section; belongs to the 3-hydroxyacyl-CoA dehydrogenase family. In terms of assembly, heterotetramer of two alpha chains (FadJ) and two beta chains (FadI).

It is found in the cytoplasm. It carries out the reaction a (3S)-3-hydroxyacyl-CoA = a (2E)-enoyl-CoA + H2O. It catalyses the reaction a 4-saturated-(3S)-3-hydroxyacyl-CoA = a (3E)-enoyl-CoA + H2O. The catalysed reaction is a (3S)-3-hydroxyacyl-CoA + NAD(+) = a 3-oxoacyl-CoA + NADH + H(+). The enzyme catalyses (3S)-3-hydroxybutanoyl-CoA = (3R)-3-hydroxybutanoyl-CoA. Its pathway is lipid metabolism; fatty acid beta-oxidation. Catalyzes the formation of a hydroxyacyl-CoA by addition of water on enoyl-CoA. Also exhibits 3-hydroxyacyl-CoA epimerase and 3-hydroxyacyl-CoA dehydrogenase activities. The chain is Fatty acid oxidation complex subunit alpha from Idiomarina loihiensis (strain ATCC BAA-735 / DSM 15497 / L2-TR).